Consider the following 190-residue polypeptide: LOB domain-containing protein 1 (190 aa).

Residues 1 to 11 show a composition bias toward polar residues; sequence MESKSDASVAT. Residues 1-27 form a disordered region; sequence MESKSDASVATTPIISSSSSPPPSLSP. One can recognise an LOB domain in the interval 32 to 133; sequence SPCAACKILR…AQLAKAQVEM (102 aa).

The protein belongs to the LOB domain-containing protein family. Expressed in young shoots, roots, stems, leaves and flowers.

The chain is LOB domain-containing protein 1 (LBD1) from Arabidopsis thaliana (Mouse-ear cress).